Reading from the N-terminus, the 310-residue chain is Carbamate kinase 1 (310 aa).

It belongs to the carbamate kinase family.

Its subcellular location is the cytoplasm. The enzyme catalyses hydrogencarbonate + NH4(+) + ATP = carbamoyl phosphate + ADP + H2O + H(+). It functions in the pathway metabolic intermediate metabolism; carbamoyl phosphate degradation; CO(2) and NH(3) from carbamoyl phosphate: step 1/1. The sequence is that of Carbamate kinase 1 (arcC1) from Staphylococcus aureus (strain bovine RF122 / ET3-1).